The chain runs to 154 residues: Ribosomal RNA large subunit methyltransferase H (154 aa).

Residues leucine 70, glycine 102, and 121–126 (LSRMTL) contribute to the S-adenosyl-L-methionine site.

This sequence belongs to the RNA methyltransferase RlmH family. In terms of assembly, homodimer.

Its subcellular location is the cytoplasm. It carries out the reaction pseudouridine(1915) in 23S rRNA + S-adenosyl-L-methionine = N(3)-methylpseudouridine(1915) in 23S rRNA + S-adenosyl-L-homocysteine + H(+). Specifically methylates the pseudouridine at position 1915 (m3Psi1915) in 23S rRNA. This is Ribosomal RNA large subunit methyltransferase H from Citrifermentans bemidjiense (strain ATCC BAA-1014 / DSM 16622 / JCM 12645 / Bem) (Geobacter bemidjiensis).